The sequence spans 145 residues: MSAQKMTNEQILKYVQSKQIRKDIPEFRSGDTIIVHNKIIENNKSRIQKFEGVVIRRRGSGLSETIIVRKESSGIGVERIFQLHSPQIEKIEVIRLGKVRRAYLTYLRERSGKSARIKERRPAKAVEKTSKPASAKKPAAKANKK.

Residues 112-130 (GKSARIKERRPAKAVEKTS) are compositionally biased toward basic and acidic residues. The tract at residues 112 to 145 (GKSARIKERRPAKAVEKTSKPASAKKPAAKANKK) is disordered.

This sequence belongs to the bacterial ribosomal protein bL19 family.

Its function is as follows. This protein is located at the 30S-50S ribosomal subunit interface and may play a role in the structure and function of the aminoacyl-tRNA binding site. This is Large ribosomal subunit protein bL19 from Malacoplasma penetrans (strain HF-2) (Mycoplasma penetrans).